The sequence spans 94 residues: Dynein light chain, cytoplasmic (94 aa).

This sequence belongs to the dynein light chain family. In terms of assembly, homodimer. Cytoplasmic dynein consists of two catalytic heavy chains (HCs) and a number of non-catalytic subunits which present intermediate chains (ICs), light intermediate chains (LICs) and light chains (LCs). Component of the nuclear pore complex (NPC). The nuclear pore complex constitutes the exclusive means of nucleocytoplasmic transport. NPCs allow the passive diffusion of ions and small molecules and the active, nuclear transport receptor-mediated bidirectional transport of macromolecules such as proteins, RNAs, ribonucleoparticles (RNPs), and ribosomal subunits across the nuclear envelope. Due to its 8-fold rotational symmetry, all subunits are present with 8 copies or multiples thereof.

Its subcellular location is the cytoplasm. The protein resides in the cytoskeleton. The protein localises to the nucleus. It localises to the nuclear pore complex. In terms of biological role, acts as one of several non-catalytic accessory components of the cytoplasmic dynein complex that are thought to be involved in linking dynein to cargos and to adapter proteins that regulate dynein function. Cytoplasmic dynein 1 acts as a motor for the intracellular retrograde motility of vesicles and organelles along microtubules. May play a role in changing or maintaining the spatial distribution of cytoskeletal structures. Also a component of the nuclear pore complex. This chain is Dynein light chain, cytoplasmic (nudG), found in Emericella nidulans (strain FGSC A4 / ATCC 38163 / CBS 112.46 / NRRL 194 / M139) (Aspergillus nidulans).